Consider the following 211-residue polypeptide: Redox-sensing transcriptional repressor Rex (211 aa).

Positions 18 to 57 form a DNA-binding region, H-T-H motif; it reads LYYRFIESLHAAGKQRVSSTELSQAVKVDSATIRRDFSYF. 92–97 lines the NAD(+) pocket; sequence GVGNLG.

It belongs to the transcriptional regulatory Rex family. Homodimer.

It localises to the cytoplasm. Its function is as follows. Modulates transcription in response to changes in cellular NADH/NAD(+) redox state. The protein is Redox-sensing transcriptional repressor Rex of Shouchella clausii (strain KSM-K16) (Alkalihalobacillus clausii).